We begin with the raw amino-acid sequence, 511 residues long: UDP-N-acetylmuramate--L-alanine ligase (511 aa).

Position 127 to 133 (127 to 133 (GTHGKTT)) interacts with ATP. The segment at 481 to 511 (VGTVPGGEVGGATTIGGTVPGGSAPGASAAG) is disordered. The segment covering 484 to 504 (VPGGEVGGATTIGGTVPGGSA) has biased composition (gly residues).

It belongs to the MurCDEF family.

The protein resides in the cytoplasm. It catalyses the reaction UDP-N-acetyl-alpha-D-muramate + L-alanine + ATP = UDP-N-acetyl-alpha-D-muramoyl-L-alanine + ADP + phosphate + H(+). It participates in cell wall biogenesis; peptidoglycan biosynthesis. Cell wall formation. This is UDP-N-acetylmuramate--L-alanine ligase from Salinispora arenicola (strain CNS-205).